A 642-amino-acid chain; its full sequence is MSLWLFFVQTVLLIQCALGGLPNAKDYLVAPDLLPGLNDVKDKELIPEMHAGHIPLDDGDDDDDDDEKNYFFWKFHDLANQTSVVASKTLIIWLNGGPGCSSLDGALMESGALRIDDDGEAYLNPGSWHTRGDIVFVDQPAGTGFSTVGDSKYDKDLNQVSKHFMKFLKNYFKIFPDDLDKDLVLAGESYAGQYIPFFANEILKFNSKLDKDDNEEESRSGKKYNLKSLLIGNGWIDPDQQSLSYIPFALENNLISTKADYFPDLLNMHSRCQNLVNNNGGKKFSFDECEDILTKILYYTRRKTDENGNKVPSNQECTNIYDFRLFDSYPACGSNWPDDLPSVSKFLGKPGVMDSLHLDVDKVPHWRECDSKVSSHLKNKNTQPSIHLLPNLLKHMQIFLFNGDKDIICNSRGVQDLIKNMKWNNHTGFTNDAEYYDWQYYDQFTDDTISAGFVKHESNLTYVSVYNASHMVPYDNALISRGIMDIYLKDVELVVGKDNQDDVIISKDFVVHSDHSTGEEELSADQKQDEDENSHKDRHRNSDKFEIAVILLVVFSITGTIAYYFLRERFRKQIHAILIDPENRPPSSNKSVAWADDIENQGDDFKLSIDEAPSTADKPAKNKSGYTKVPNTDDDSFELDNL.

The N-terminal stretch at 1-19 (MSLWLFFVQTVLLIQCALG) is a signal peptide. Residues 20–544 (GLPNAKDYLV…HKDRHRNSDK (525 aa)) are Lumenal-facing. Asn-80 carries N-linked (GlcNAc...) asparagine glycosylation. Residues Ser-189 and Asp-406 contribute to the active site. N-linked (GlcNAc...) asparagine glycosylation is found at Asn-425, Asn-459, and Asn-467. His-470 is a catalytic residue. The disordered stretch occupies residues 515–539 (HSTGEEELSADQKQDEDENSHKDRH). Positions 519 to 532 (EEELSADQKQDEDE) are enriched in acidic residues. The chain crosses the membrane as a helical span at residues 545-565 (FEIAVILLVVFSITGTIAYYF). At 566–642 (LRERFRKQIH…DDDSFELDNL (77 aa)) the chain is on the cytoplasmic side. The interval 609 to 642 (IDEAPSTADKPAKNKSGYTKVPNTDDDSFELDNL) is disordered. Residues 632-642 (TDDDSFELDNL) are compositionally biased toward acidic residues.

Belongs to the peptidase S10 family.

The protein resides in the golgi apparatus. It is found in the trans-Golgi network membrane. It catalyses the reaction Preferential release of a C-terminal arginine or lysine residue.. Protease with a carboxypeptidase B-like function involved in the C-terminal processing of the lysine and arginine residues from protein precursors. Promotes cell fusion and is involved in the programmed cell death. The sequence is that of Pheromone-processing carboxypeptidase KEX1 (KEX1) from Kluyveromyces lactis (strain ATCC 8585 / CBS 2359 / DSM 70799 / NBRC 1267 / NRRL Y-1140 / WM37) (Yeast).